Here is a 95-residue protein sequence, read N- to C-terminus: Small ribosomal subunit protein bS6 (95 aa).

It belongs to the bacterial ribosomal protein bS6 family.

In terms of biological role, binds together with bS18 to 16S ribosomal RNA. This chain is Small ribosomal subunit protein bS6, found in Desulfitobacterium hafniense (strain DSM 10664 / DCB-2).